The chain runs to 444 residues: Acyl-CoA 6-desaturase (444 aa).

Residues 1–122 are Cytoplasmic-facing; sequence MGKGGNQDEG…FRALRKTAED (122 aa). The Cytochrome b5 heme-binding domain occupies 18–95; sequence MPTFRWEEIQ…MKPLLIGELA (78 aa). Residues 123 to 143 form a helical membrane-spanning segment; the sequence is MNLFKSNQLFFLLHLAHIIAM. Residues 144–147 are Lumenal-facing; sequence ESIA. The chain crosses the membrane as a helical span at residues 148-168; sequence WFTLFYFGNGWIPTIITAFVL. Residues 169 to 264 are Cytoplasmic-facing; that stretch reads ATSQAQAGWL…KYLPYNHQHE (96 aa). Residues 180–184 carry the Histidine box-1 motif; the sequence is HDYGH. A Histidine box-2 motif is present at residues 217–221; sequence HFQHH. The helical transmembrane segment at 265-285 threads the bilayer; sequence YFFLIGPPLLIPLYFQYQIIM. Topologically, residues 286 to 305 are lumenal; that stretch reads TMIVRKYWADLAWAISYYTR. Residues 306 to 326 traverse the membrane as a helical segment; it reads FFITYIPFYGVLGSILFLNFI. Topologically, residues 327–444 are cytoplasmic; it reads RFLESHWFVW…QLWLDAYLHK (118 aa). The Histidine box-3 motif lies at 382–386; sequence QIEHH.

Belongs to the fatty acid desaturase type 1 family.

The protein localises to the endoplasmic reticulum membrane. It carries out the reaction (9Z,12Z)-octadecadienoyl-CoA + 2 Fe(II)-[cytochrome b5] + O2 + 2 H(+) = (6Z,9Z,12Z)-octadecatrienoyl-CoA + 2 Fe(III)-[cytochrome b5] + 2 H2O. It catalyses the reaction (9Z,12Z,15Z)-octadecatrienoyl-CoA + 2 Fe(II)-[cytochrome b5] + O2 + 2 H(+) = (6Z,9Z,12Z,15Z)-octadecatetraenoyl-CoA + 2 Fe(III)-[cytochrome b5] + 2 H2O. The enzyme catalyses (9Z,12Z,15Z,18Z,21Z)-tetracosapentaenoyl-CoA + 2 Fe(II)-[cytochrome b5] + O2 + 2 H(+) = (6Z,9Z,12Z,15Z,18Z,21Z)-tetracosahexaenoyl-CoA + 2 Fe(III)-[cytochrome b5] + 2 H2O. The catalysed reaction is (11E)-octadecenoyl-CoA + 2 Fe(II)-[cytochrome b5] + O2 + 2 H(+) = (6Z,11E)-octadecadienoyl-CoA + 2 Fe(III)-[cytochrome b5] + 2 H2O. It carries out the reaction (11Z,14Z)-eicosadienoyl-CoA + 2 Fe(II)-[cytochrome b5] + O2 + 2 H(+) = (8Z,11Z,14Z)-eicosatrienoyl-CoA + 2 Fe(III)-[cytochrome b5] + 2 H2O. It catalyses the reaction (11Z,14Z,17Z)-eicosatrienoyl-CoA + 2 Fe(II)-[cytochrome b5] + O2 + 2 H(+) = (8Z,11Z,14Z,17Z)-eicosatetraenoyl-CoA + 2 Fe(III)-[cytochrome b5] + 2 H2O. It participates in lipid metabolism; polyunsaturated fatty acid biosynthesis. Involved in the biosynthesis of highly unsaturated fatty acids (HUFA) from the essential polyunsaturated fatty acids (PUFA) linoleic acid (LA) (18:2n-6) and alpha-linolenic acid (ALA) (18:3n-3) precursors, acting as a fatty acyl-coenzyme A (CoA) desaturase that introduces a cis double bond at carbon 6 of the fatty acyl chain. Catalyzes the first and rate limiting step in this pathway which is the desaturation of LA (18:2n-6) and ALA (18:3n-3) into gamma-linoleate (GLA) (18:3n-6) and stearidonate (18:4n-3), respectively. Subsequently, in the biosynthetic pathway of HUFA n-3 series, it desaturates tetracosapentaenoate (24:5n-3) to tetracosahexaenoate (24:6n-3), which is then converted to docosahexaenoate (DHA)(22:6n-3), an important lipid for nervous system function. It can also desaturate (11E)-octadecenoate (trans-vaccenoate, a metabolite in the biohydrogenation pathway of LA and the predominant trans fatty acid in cow milk) at carbon 6 generating (6Z,11E)-octadecadienoate. In addition to Delta-6 activity, this enzyme exhibits Delta-8 activity with slight biases toward n-3 fatty acyl-CoA substrates. The protein is Acyl-CoA 6-desaturase (FADS2) of Bos taurus (Bovine).